A 406-amino-acid polypeptide reads, in one-letter code: Cysteine desulfurase (406 aa).

N6-(pyridoxal phosphate)lysine is present on Lys226. Residue Cys364 is the Cysteine persulfide intermediate of the active site.

The protein belongs to the class-V pyridoxal-phosphate-dependent aminotransferase family. Csd subfamily. In terms of assembly, homodimer. Interacts with SufE and the SufBCD complex composed of SufB, SufC and SufD. The interaction with SufE is required to mediate the direct transfer of the sulfur atom from the S-sulfanylcysteine. The cofactor is pyridoxal 5'-phosphate.

The protein resides in the cytoplasm. It carries out the reaction (sulfur carrier)-H + L-cysteine = (sulfur carrier)-SH + L-alanine. The catalysed reaction is L-selenocysteine + AH2 = hydrogenselenide + L-alanine + A + H(+). It functions in the pathway cofactor biosynthesis; iron-sulfur cluster biosynthesis. Cysteine desulfurases mobilize the sulfur from L-cysteine to yield L-alanine, an essential step in sulfur metabolism for biosynthesis of a variety of sulfur-containing biomolecules. Component of the suf operon, which is activated and required under specific conditions such as oxidative stress and iron limitation. Acts as a potent selenocysteine lyase in vitro, that mobilizes selenium from L-selenocysteine. Selenocysteine lyase activity is however unsure in vivo. The polypeptide is Cysteine desulfurase (Escherichia coli O127:H6 (strain E2348/69 / EPEC)).